The following is a 280-amino-acid chain: PsbP domain-containing protein 7, chloroplastic (280 aa).

Residues Met1 to Pro36 constitute a chloroplast transit peptide.

Belongs to the PsbP family.

The protein resides in the plastid. It is found in the chloroplast. This chain is PsbP domain-containing protein 7, chloroplastic (PPD7), found in Arabidopsis thaliana (Mouse-ear cress).